The sequence spans 555 residues: Urocanate hydratase (555 aa).

Residues 51 to 52 (GG), Gln-129, 175 to 177 (GMG), Glu-195, 262 to 266 (QTSAH), 272 to 273 (YL), and Tyr-321 contribute to the NAD(+) site. Residue Cys-409 is part of the active site. Position 491 (Gly-491) interacts with NAD(+).

This sequence belongs to the urocanase family. It depends on NAD(+) as a cofactor.

The protein resides in the cytoplasm. It carries out the reaction 4-imidazolone-5-propanoate = trans-urocanate + H2O. It participates in amino-acid degradation; L-histidine degradation into L-glutamate; N-formimidoyl-L-glutamate from L-histidine: step 2/3. Its function is as follows. Catalyzes the conversion of urocanate to 4-imidazolone-5-propionate. The sequence is that of Urocanate hydratase from Xanthomonas axonopodis pv. citri (strain 306).